The sequence spans 507 residues: Acetylcholine receptor subunit beta-type lev-1 (507 aa).

Residues 1 to 31 (MMLGGGGGCGAGGTWLGFLVFLAVSLRNHST) form the signal peptide. N-linked (GlcNAc...) asparagine glycans are attached at residues Asn-28, Asn-58, and Asn-109. The Extracellular portion of the chain corresponds to 32 to 138 (CEDIDAEDRL…NNADGNYEVS (107 aa)). A helical transmembrane segment spans residues 139-159 (FMCNVLILSTGTVLWVPPAIY). Cys-163 and Cys-177 are oxidised to a cystine. The next 3 helical transmembrane spans lie at 243-263 (VVLI…FYLP), 271-291 (GLTM…SKIL), and 305-325 (LLLT…ICNI). A disordered region spans residues 373 to 392 (GPSVEENPMRSGEHHPLCRH). Residues 379–392 (NPMRSGEHHPLCRH) are compositionally biased toward basic and acidic residues. Residues 454–474 (FLLYGFFGATVGGTIGIIFTA) form a helical membrane-spanning segment.

Belongs to the ligand-gated ion channel (TC 1.A.9) family. Acetylcholine receptor (TC 1.A.9.1) subfamily. In terms of assembly, interacts with unc-29. Component of nicotinic acetylcholine receptor composed of 2 non-alpha subunits lev-1 and unc-29, and 3 alpha subunits unc-38, unc-63 and lev-8.

The protein localises to the postsynaptic cell membrane. The protein resides in the cell membrane. In terms of biological role, non-alpha subunit of nicotinic acetylcholine receptor (nAChR). Involved in nAChR sensitivity to nicotine. This Caenorhabditis elegans protein is Acetylcholine receptor subunit beta-type lev-1 (lev-1).